We begin with the raw amino-acid sequence, 537 residues long: Phosphoenolpyruvate carboxykinase (ATP) (537 aa).

3 residues coordinate substrate: Arg-61, Tyr-194, and Lys-200. Residues Lys-200, His-219, and 235-243 each bind ATP; that span reads GLSGTGKTT. 2 residues coordinate Mn(2+): Lys-200 and His-219. Asp-256 contacts Mn(2+). Residues Glu-284, Arg-322, and Thr-448 each contribute to the ATP site. Arg-322 lines the substrate pocket.

It belongs to the phosphoenolpyruvate carboxykinase (ATP) family. Mn(2+) is required as a cofactor.

The protein resides in the cytoplasm. It carries out the reaction oxaloacetate + ATP = phosphoenolpyruvate + ADP + CO2. Its pathway is carbohydrate biosynthesis; gluconeogenesis. Involved in the gluconeogenesis. Catalyzes the conversion of oxaloacetate (OAA) to phosphoenolpyruvate (PEP) through direct phosphoryl transfer between the nucleoside triphosphate and OAA. This Bradyrhizobium sp. (strain BTAi1 / ATCC BAA-1182) protein is Phosphoenolpyruvate carboxykinase (ATP).